Consider the following 570-residue polypeptide: Urease subunit alpha (570 aa).

The Urease domain occupies 131–570; it reads GGMDSHIHFI…LPMAQRYFLF (440 aa). 3 residues coordinate Ni(2+): histidine 136, histidine 138, and lysine 219. Lysine 219 is subject to N6-carboxylysine. Histidine 221 is a substrate binding site. Ni(2+) is bound by residues histidine 248 and histidine 274. Catalysis depends on histidine 322, which acts as the Proton donor. Ni(2+) is bound at residue aspartate 362.

It belongs to the metallo-dependent hydrolases superfamily. Urease alpha subunit family. As to quaternary structure, heterotrimer of UreA (gamma), UreB (beta) and UreC (alpha) subunits. Three heterotrimers associate to form the active enzyme. Ni cation serves as cofactor. Carboxylation allows a single lysine to coordinate two nickel ions.

The protein resides in the cytoplasm. It catalyses the reaction urea + 2 H2O + H(+) = hydrogencarbonate + 2 NH4(+). It participates in nitrogen metabolism; urea degradation; CO(2) and NH(3) from urea (urease route): step 1/1. This Rhizobium etli (strain ATCC 51251 / DSM 11541 / JCM 21823 / NBRC 15573 / CFN 42) protein is Urease subunit alpha.